We begin with the raw amino-acid sequence, 86 residues long: Large ribosomal subunit protein uL23 (86 aa).

Belongs to the universal ribosomal protein uL23 family. Part of the 50S ribosomal subunit. Contacts protein L29.

Its function is as follows. Binds to 23S rRNA. One of the proteins that surrounds the polypeptide exit tunnel on the outside of the ribosome. This is Large ribosomal subunit protein uL23 from Methanococcus maripaludis (strain C7 / ATCC BAA-1331).